The sequence spans 294 residues: Thymidylate synthase (294 aa).

Residues Arg-30 and 156–157 each bind dUMP; that span reads RR. Cys-176 serves as the catalytic Nucleophile. DUMP-binding positions include 196–199, Asn-207, and 237–239; these read RSGD and HVY. Residue Asp-199 participates in (6R)-5,10-methylene-5,6,7,8-tetrahydrofolate binding. A (6R)-5,10-methylene-5,6,7,8-tetrahydrofolate-binding site is contributed by Ala-293.

This sequence belongs to the thymidylate synthase family. In terms of assembly, homodimer.

The catalysed reaction is dUMP + (6R)-5,10-methylene-5,6,7,8-tetrahydrofolate = 7,8-dihydrofolate + dTMP. It participates in pyrimidine metabolism; dTTP biosynthesis. The chain is Thymidylate synthase from Ascaris suum (Pig roundworm).